Here is a 32-residue protein sequence, read N- to C-terminus: Conotoxin pr6d (32 aa).

Proline 5 is modified (4-hydroxyproline). Intrachain disulfides connect cysteine 7/cysteine 20, cysteine 14/cysteine 25, and cysteine 19/cysteine 30.

As to expression, expressed by the venom duct.

It localises to the secreted. The chain is Conotoxin pr6d from Conus parius (Cone snail).